A 314-amino-acid polypeptide reads, in one-letter code: tRNA dimethylallyltransferase (314 aa).

An ATP-binding site is contributed by 10–17 (GPTAVGKT). 12–17 (TAVGKT) contributes to the substrate binding site. Residues 35–38 (DSMQ) form an interaction with substrate tRNA region.

Belongs to the IPP transferase family. As to quaternary structure, monomer. Mg(2+) is required as a cofactor.

It catalyses the reaction adenosine(37) in tRNA + dimethylallyl diphosphate = N(6)-dimethylallyladenosine(37) in tRNA + diphosphate. Its function is as follows. Catalyzes the transfer of a dimethylallyl group onto the adenine at position 37 in tRNAs that read codons beginning with uridine, leading to the formation of N6-(dimethylallyl)adenosine (i(6)A). In Clostridium novyi (strain NT), this protein is tRNA dimethylallyltransferase.